Here is a 250-residue protein sequence, read N- to C-terminus: Global transcriptional regulator CodY (250 aa).

The tract at residues 1 to 146 (MTLLEKTRKL…GATVVGLEIL (146 aa)) is GAF domain. A DNA-binding region (H-T-H motif) is located at residues 194-213 (ASKIADKVGITRSVIVNALR).

The protein belongs to the CodY family.

It localises to the cytoplasm. Its function is as follows. DNA-binding global transcriptional regulator which is involved in the adaptive response to starvation and acts by directly or indirectly controlling the expression of numerous genes in response to nutrient availability. During rapid exponential growth, CodY is highly active and represses genes whose products allow adaptation to nutrient depletion. The polypeptide is Global transcriptional regulator CodY (Caldanaerobacter subterraneus subsp. tengcongensis (strain DSM 15242 / JCM 11007 / NBRC 100824 / MB4) (Thermoanaerobacter tengcongensis)).